Reading from the N-terminus, the 313-residue chain is Malate dehydrogenase (313 aa).

Residues 11-16 and D35 each bind NAD(+); that span reads GAGNIG. The substrate site is built by R84 and R90. Residues N97 and 120–122 contribute to the NAD(+) site; that span reads VTN. The substrate site is built by N122 and R153. Residue H177 is the Proton acceptor of the active site.

The protein belongs to the LDH/MDH superfamily. MDH type 3 family.

It catalyses the reaction (S)-malate + NAD(+) = oxaloacetate + NADH + H(+). Functionally, catalyzes the reversible oxidation of malate to oxaloacetate. The polypeptide is Malate dehydrogenase (Ehrlichia canis (strain Jake)).